The primary structure comprises 1412 residues: Cardiac-enriched FHL2-interacting protein (1412 aa).

7 disordered regions span residues Val-106 to Ala-177, Val-202 to Pro-443, Leu-460 to Pro-500, Tyr-517 to His-848, Ser-877 to Thr-923, Glu-935 to Thr-1255, and Arg-1344 to Ser-1412. Thr-120 carries the phosphothreonine modification. Low complexity predominate over residues Ser-135 to Ser-145. Over residues Arg-161–Lys-171 the composition is skewed to pro residues. The span at Val-202 to Ser-212 shows a compositional bias: polar residues. Basic and acidic residues-rich tracts occupy residues Trp-285 to Ala-299 and Lys-306 to Leu-316. A Phosphoserine modification is found at Ser-328. The span at Ser-343 to Gly-352 shows a compositional bias: polar residues. Positions Lys-378–Thr-389 are enriched in basic residues. A Phosphoserine modification is found at Ser-473. Basic and acidic residues-rich tracts occupy residues Gln-482–Lys-496 and Gly-525–Gln-538. A compositionally biased stretch (low complexity) spans Ser-587 to Asn-612. Basic and acidic residues predominate over residues Gly-632–Pro-641. Polar residues-rich tracts occupy residues Asn-670–Glu-679, Gly-687–Phe-697, and Ser-712–Arg-722. The span at Phe-728–Glu-741 shows a compositional bias: low complexity. The segment covering Gln-753–Arg-799 has biased composition (basic and acidic residues). Ser-813 bears the Phosphoserine mark. Positions Ala-826–Asp-837 are enriched in basic and acidic residues. Polar residues-rich tracts occupy residues Ala-904 to Pro-921, Gln-943 to Gly-953, and Ala-1047 to Ala-1066. A compositionally biased stretch (basic residues) spans Arg-1164 to Lys-1175. Positions Ser-1176–Pro-1203 are enriched in basic and acidic residues. The span at Asp-1401 to Ser-1412 shows a compositional bias: acidic residues.

As to quaternary structure, interacts with FHL2. Expressed in the heart and skeletal muscle (at protein level).

The protein resides in the cytoplasm. The protein localises to the myofibril. Its subcellular location is the sarcomere. It is found in the z line. Functionally, plays an important role in cardiomyocyte hypertrophy via activation of the calcineurin/NFAT signaling pathway. In Mus musculus (Mouse), this protein is Cardiac-enriched FHL2-interacting protein.